The sequence spans 1054 residues: MTDKVRIYDIAREMGRDSRDVLEVCEQLGIPFKTHSSTISPEQAELVRSKLGAPHIVKPPRPRPKPPSESLPPEPPAEAKVGERPQQKVPGTASAIVGIRRPAPAQQPAPVGEAKTAETLPAAKPSLSRPERVSPEKGSAGGAQLIGPPRRQVTPLVRSSEATQKPETVSQPATPPTPSESAAAKASGSEPSPVAKRPIVLSPPQRATSGTKPPAERPEPPQKAPEPSRPSPSEAPSPSHARVPQPAEEKAPSPPPAQRPRPQLVSAPVRPGTRSPATKEDSVSSGKAGEAPRPQRRMELVGPPTRPVAKPAPPEPDAASPLPERIPGERPSPVLVEAPVRPTPPKVKRKTEEEEDDELQALSRRAARVQAKRKRSRRRGEGDGDGLDLDPMTIISAVKQAELNALKPLARPTAKPPSYRPPAATAAPPARPRPAARLQQQPTSAEAGAADRASGTEPLPEEKVLLLDGSLTVQELAHRLRVAETEIIKTLFFKGVMVTINQVLDESLAESVAKELGYEIRRPKAEPEAKKTEMLDVEDIDHLVSRPPVVTIMGHVDHGKTTLLDAIRDTKVAQGEAGGITQRIGAYHVDVNFEGQKRRIVFLDTPGHQAFTAMRARGARVTDIAVLVVAADDGVQPQTLEAISHARAAQVPIIVAINKIDKPGSQPERIKQQLAEHGLLPEEWGGDTPMVEVSALTRRNLDALLEMILLVADVAELQANPNRPARGTVIEAHLDKARGPVATLLVQNGTLRVGDTLVAGAVLGRVKAMMDDRGQRLQEAGPSSAVQLLGLDEVPAAGDEFQVYTDEKEARRIAQERAEVLRQTRLQQALLSRRVSLGSVSAKAQEGQLKELNLIIKTDVQGSAEAIQTALRDLPQEEVQLRVLLAAPGEITETDVDLAAASDAIILGFNTTLAPGARQAADDKGVDVREYDIIYNLLDDLRAAMEGLLEPEEVEEPLGQAEVRLVIPIGRGAVAGSYVLSGKVQRNALVRVRRRGEVVYEGRLDSLKRFKDDVREVAAGFECGIGIDKFQSWQEGDIIEVYQMVTKRRTLASV.

2 disordered regions span residues 48-390 (RSKL…LDLD) and 409-458 (LARP…GTEP). A compositionally biased stretch (pro residues) spans 65–76 (KPPSESLPPEPP). Over residues 160–169 (SEATQKPETV) the composition is skewed to polar residues. A compositionally biased stretch (low complexity) spans 179–193 (SESAAAKASGSEPSP). Pro residues-rich tracts occupy residues 221–235 (PQKA…PSEA) and 304–316 (PTRP…PPEP). A compositionally biased stretch (basic residues) spans 365 to 378 (RAARVQAKRKRSRR). Positions 421–437 (PPAATAAPPARPRPAAR) are enriched in low complexity. A tr-type G domain is found at 545–718 (SRPPVVTIMG…LLVADVAELQ (174 aa)). A G1 region spans residues 554 to 561 (GHVDHGKT). Residue 554–561 (GHVDHGKT) coordinates GTP. The G2 stretch occupies residues 579-583 (GITQR). The segment at 604 to 607 (DTPG) is G3. GTP-binding positions include 604–608 (DTPGH) and 658–661 (NKID). The tract at residues 658-661 (NKID) is G4. Positions 694-696 (SAL) are G5.

The protein belongs to the TRAFAC class translation factor GTPase superfamily. Classic translation factor GTPase family. IF-2 subfamily.

It is found in the cytoplasm. Functionally, one of the essential components for the initiation of protein synthesis. Protects formylmethionyl-tRNA from spontaneous hydrolysis and promotes its binding to the 30S ribosomal subunits. Also involved in the hydrolysis of GTP during the formation of the 70S ribosomal complex. The protein is Translation initiation factor IF-2 of Synechococcus sp. (strain JA-2-3B'a(2-13)) (Cyanobacteria bacterium Yellowstone B-Prime).